The primary structure comprises 598 residues: Torsin-1A-interacting protein 1 (598 aa).

Topologically, residues 1 to 351 (MAGEGRRAEA…PQNASFVKRN (351 aa)) are nuclear. Disordered stretches follow at residues 19 to 254 (VTPR…RSSS) and 267 to 314 (QNFT…IYGS). Ser-60 carries the phosphoserine modification. Composition is skewed to basic and acidic residues over residues 73 to 101 (LVDK…EVRE) and 115 to 124 (RPQEAEEMKT). Residues Ser-135, Ser-143, Ser-154, Ser-156, Ser-157, and Ser-187 each carry the phosphoserine modification. Residues 205–214 (EATSVQQKVN) show a composition bias toward polar residues. Ser-216 carries the post-translational modification Phosphoserine. Thr-221 bears the Phosphothreonine mark. 3 positions are modified to phosphoserine: Ser-227, Ser-230, and Ser-242. Residues 238-250 (RSRDSDESGDKTT) show a composition bias toward basic and acidic residues. Composition is skewed to polar residues over residues 277–287 (SVLSSGYQKTP) and 300–313 (RMQT…SIYG). At Ser-320 the chain carries Phosphoserine. The interval 322–341 (LKSELGNQSPSTSSQQVTGQ) is disordered. A Glycyl lysine isopeptide (Lys-Gly) (interchain with G-Cter in SUMO2) cross-link involves residue Lys-323. The span at 326–341 (LGNQSPSTSSQQVTGQ) shows a compositional bias: polar residues. Ser-330 carries the post-translational modification Phosphoserine. The chain crosses the membrane as a helical span at residues 352-372 (WWWLLPLIAALASGSFWFFST). Residues 371 to 598 (STPEVETTAV…ENALKRGICL (228 aa)) are interaction with TOR1A. The Perinuclear space segment spans residues 373-598 (PEVETTAVQE…ENALKRGICL (226 aa)). Positions 374-450 (EVETTAVQEF…SEQIADAYSS (77 aa)) form a coiled coil. An N-linked (GlcNAc...) asparagine glycan is attached at Asn-414.

The protein belongs to the TOR1AIP family. Interacts with ATP1B4. Interacts with TOR1A (ATP-bound). Interacts with TOR1B, TOR2A and TOR3A.

It localises to the nucleus inner membrane. Required for nuclear membrane integrity. Induces TOR1A and TOR1B ATPase activity and is required for their location on the nuclear membrane. Binds to A- and B-type lamins. Possible role in membrane attachment and assembly of the nuclear lamina. The chain is Torsin-1A-interacting protein 1 (TOR1AIP1) from Pongo abelii (Sumatran orangutan).